The following is a 353-amino-acid chain: 3'(2'),5'-bisphosphate nucleotidase 1 (353 aa).

Residue Asp-46 is the Proton acceptor of the active site. Glu-71, Asp-134, Ile-136, and Asp-137 together coordinate Mg(2+). Thr-139 serves as the catalytic Proton acceptor. Adenosine 3',5'-bisphosphate is bound by residues Thr-139, His-235, Ser-259, Lys-262, Arg-276, and Asp-288. His-235, Ser-259, Lys-262, Arg-276, and Asp-288 together coordinate AMP. Asp-288 contributes to the Mg(2+) binding site.

The protein belongs to the inositol monophosphatase superfamily. It depends on Mg(2+) as a cofactor. In terms of tissue distribution, expressed in roots, leaves, stems, flowers and siliques.

The enzyme catalyses 3'-phosphoadenylyl sulfate + H2O = adenosine 5'-phosphosulfate + phosphate. The catalysed reaction is adenosine 3',5'-bisphosphate + H2O = AMP + phosphate. It catalyses the reaction adenosine 2',5'-bisphosphate + H2O = AMP + phosphate. It carries out the reaction 1D-myo-inositol 1,4-bisphosphate + H2O = 1D-myo-inositol 4-phosphate + phosphate. The enzyme catalyses 1D-myo-inositol 1,3,4-trisphosphate + H2O = 1D-myo-inositol 3,4-bisphosphate + phosphate. It functions in the pathway signal transduction; phosphatidylinositol signaling pathway. With respect to regulation, inhibited non-competitively by Li(+) (IC(50)=0.20 mM) and Na(+) (IC(50)=200 mM). Its function is as follows. Phosphatase that converts adenosine 3'-phosphate 5'-phosphosulfate (PAPS) to adenosine 5'-phosphosulfate (APS) and 3'(2')-phosphoadenosine 5'-phosphate (PAP) to AMP. May regulate the flux of sulfur in the sulfur-activation pathway by converting PAPS to APS. May play a role in the biosynthesis of sulfate conjugates and RNA processing. Is also able to hydrolyze inositol 1,4-bisphosphate and inositol 1,3,4-trisphosphate. Could be considered as a negative regulator of abscisic acid (ABA)- and stress-responsive genes, through modulating the inositol 1,4,5-trisphosphate (IP3) turnover. Is also involved in salt tolerance. Acts as a suppressor of virus- and transgene-induced silencing. In Arabidopsis thaliana (Mouse-ear cress), this protein is 3'(2'),5'-bisphosphate nucleotidase 1.